Consider the following 457-residue polypeptide: Na(+)/H(+) antiporter NhaA (457 aa).

11 helical membrane-spanning segments follow: residues 33–53 (ASGIVLLSCAVAALALANSPL), 76–96 (FSLAMLVNDGLMTIFFFVVGM), 114–134 (LLPLVAALGGMAVPAAIFLAF), 142–162 (AGWGVPMATDIAFCVGVLTLL), 172–192 (VFVTALAIFDDIGGILVIALF), 196–216 (GLQLTWLAAAGGLTAALALMS), 235–255 (YALHHGGIHATIAGVIAGLAI), 308–328 (FVHALHPWVAFAIMPVFALAN), 349–369 (TALALFAGKLVGIFCCTWIAV), 385–405 (LIGVSAVAGIGFTVALFIAGL), and 419–439 (VGILAGSLVSGVVGALVLRLT).

It belongs to the NhaA Na(+)/H(+) (TC 2.A.33) antiporter family.

It localises to the cell inner membrane. The enzyme catalyses Na(+)(in) + 2 H(+)(out) = Na(+)(out) + 2 H(+)(in). Its function is as follows. Na(+)/H(+) antiporter that extrudes sodium in exchange for external protons. This is Na(+)/H(+) antiporter NhaA from Anaeromyxobacter sp. (strain Fw109-5).